A 145-amino-acid polypeptide reads, in one-letter code: Toxin Res (145 aa).

Belongs to the MbcT/ParT/Res family. Homodimer. Forms a complex with cognate antitoxin Xre; the 2 toxin molecules dimerize and each contacts an Xre homodimer. Most Res-Xre contacts are between the antitoxin molecule closest to the toxin.

In terms of biological role, toxic component of a type II toxin-antitoxin (TA) system. Expression in E.coli inhibits cell growth. In vivo it is probably neutralized by cognate antitoxin Xre; this has not been shown upon expression in E.coli. Probably depletes intracellular NAD(+). This is Toxin Res from Pseudomonas putida (strain ATCC 47054 / DSM 6125 / CFBP 8728 / NCIMB 11950 / KT2440).